Reading from the N-terminus, the 345-residue chain is GDP-mannose transporter (345 aa).

Residues 1–8 (MDNHMLNR) are Cytoplasmic-facing. Residues 9-29 (ISKSPILPVVSYCMASILMTL) form a helical membrane-spanning segment. The Lumenal portion of the chain corresponds to 30-40 (TNKYVLSSPGY). A helical transmembrane segment spans residues 41–61 (NMNFLLLTVQSTVCVAAIGIL). Over 62 to 78 (KRLKVINYRDFDFREAK) the chain is Cytoplasmic. The helical transmembrane segment at 79-101 (FWFPISFLLVAMIYTASKALQFL) threads the bilayer. Residues 102 to 104 (SVP) lie on the Lumenal side of the membrane. The helical transmembrane segment at 105–127 (VYTIFKNLTIIIIAYGEVLWFGG) threads the bilayer. At 128–131 (HVTA) the chain is on the cytoplasmic side. A helical transmembrane segment spans residues 132-150 (LTLFSFGLMVLSSIVAAWA). The Lumenal portion of the chain corresponds to 151–161 (DIQSSSFASQT). The chain crosses the membrane as a helical span at residues 162–182 (LNSGYLWMVLNCLTNAAFVLA). Residues 183–194 (MRKRIKLTNFRD) are Cytoplasmic-facing. A helical membrane pass occupies residues 195–215 (FDTMFYNNLLSIPVLVICTLF). The Lumenal segment spans residues 216-233 (TEDWSAENIAQNFPPDAK). The helical transmembrane segment at 234 to 254 (FGVLMAMAISGVSSVGISYTS) threads the bilayer. The Cytoplasmic segment spans residues 255-264 (AWCVRVTSST). Residues 265–285 (TYSMVGALNKLPLAIAGLVFF) form a helical membrane-spanning segment. The Lumenal segment spans residues 286 to 288 (DAP). The helical transmembrane segment at 289–309 (ITFGSVTAILLGFISGVVYAV) threads the bilayer. Topologically, residues 310–345 (AKSQQQRQKDPATILPMTHNPVSASSQSMRDSLSKS) are cytoplasmic. Residues 319–345 (DPATILPMTHNPVSASSQSMRDSLSKS) form a disordered region. A compositionally biased stretch (polar residues) spans 329–345 (NPVSASSQSMRDSLSKS).

Belongs to the TPT transporter family. SLC35D subfamily. As to quaternary structure, homooligomer.

Its subcellular location is the golgi apparatus membrane. It is found in the cytoplasmic vesicle membrane. The protein resides in the endoplasmic reticulum membrane. In terms of biological role, involved in the import of GDP-mannose from the cytoplasm into the Golgi lumen. This chain is GDP-mannose transporter (vrg4), found in Schizosaccharomyces pombe (strain 972 / ATCC 24843) (Fission yeast).